Consider the following 182-residue polypeptide: Sec-independent protein translocase protein TatB (182 aa).

A helical membrane pass occupies residues 1 to 21; that stretch reads MFDIGFSELLLVFVIGLIVLG. Disordered regions lie at residues 87 to 107 and 121 to 182; these read QAAESMKRTYSANDPEQASDE and TQHE…SDKP. The segment covering 168-182 has biased composition (low complexity); that stretch reads AAPVVESSPSSSDKP.

This sequence belongs to the TatB family. In terms of assembly, the Tat system comprises two distinct complexes: a TatABC complex, containing multiple copies of TatA, TatB and TatC subunits, and a separate TatA complex, containing only TatA subunits. Substrates initially bind to the TatABC complex, which probably triggers association of the separate TatA complex to form the active translocon.

It localises to the cell inner membrane. Its function is as follows. Part of the twin-arginine translocation (Tat) system that transports large folded proteins containing a characteristic twin-arginine motif in their signal peptide across membranes. Together with TatC, TatB is part of a receptor directly interacting with Tat signal peptides. TatB may form an oligomeric binding site that transiently accommodates folded Tat precursor proteins before their translocation. The polypeptide is Sec-independent protein translocase protein TatB (Salmonella choleraesuis (strain SC-B67)).